The chain runs to 154 residues: Endoribonuclease YbeY (154 aa).

3 residues coordinate Zn(2+): H114, H118, and H124.

This sequence belongs to the endoribonuclease YbeY family. The cofactor is Zn(2+).

It is found in the cytoplasm. In terms of biological role, single strand-specific metallo-endoribonuclease involved in late-stage 70S ribosome quality control and in maturation of the 3' terminus of the 16S rRNA. The polypeptide is Endoribonuclease YbeY (Marinomonas sp. (strain MWYL1)).